The following is a 109-amino-acid chain: MRWGSVILAALFEIGWVMGLKHADSALEWICTAAAVVMSFYILVKAGEKLPVGTVYAVFTGLGTAGTVVCEIALFNEPANIAKLALIGVLLCGVIGLKLVTNEEKGEAS.

4 consecutive transmembrane segments (helical) span residues 3 to 23 (WGSV…LKHA), 26 to 46 (ALEW…LVKA), 55 to 75 (VYAV…IALF), and 81 to 101 (IAKL…KLVT).

The protein belongs to the drug/metabolite transporter (DMT) superfamily. Small multidrug resistance (SMR) (TC 2.A.7.1) family. YkkC/YkkD subfamily. The efflux pump is composed of GdnC and GdnD.

Its subcellular location is the cell membrane. Functionally, probably involved in guanidinium transport. The sequence is that of Probable guanidinium efflux system subunit GdnC from Bacillus licheniformis (strain ATCC 14580 / DSM 13 / JCM 2505 / CCUG 7422 / NBRC 12200 / NCIMB 9375 / NCTC 10341 / NRRL NRS-1264 / Gibson 46).